A 1226-amino-acid polypeptide reads, in one-letter code: Receptor-type tyrosine-protein phosphatase O (1226 aa).

Residues 1–29 (MGHLPRGTLGGRRLLPLLGLFVLLKIVTT) form the signal peptide. The 86-residue stretch at 30–115 (FHVAVQDDNN…TKPSRSITVL (86 aa)) folds into the Fibronectin type-III 1 domain. Residues 30-832 (FHVAVQDDNN…VTEVNPNVVV (803 aa)) lie on the Extracellular side of the membrane. 3 N-linked (GlcNAc...) asparagine glycosylation sites follow: Asn-75, Asn-154, and Asn-227. The interval 242–305 (EPSGSFPEDS…PNSTDYESTS (64 aa)) is disordered. A compositionally biased stretch (basic and acidic residues) spans 260-270 (IGRDRRFHFPE). The span at 277 to 291 (PSNVSSGSPPSNVSS) shows a compositional bias: low complexity. Residue Asn-279 is glycosylated (N-linked (GlcNAc...) asparagine). Over residues 296 to 305 (PNSTDYESTS) the composition is skewed to polar residues. Fibronectin type-III domains lie at 339–435 (RTEK…ISPT), 445–541 (KPQH…IVPT), 542–638 (GIKD…TISF), 641–734 (APVA…LEPA), and 735–827 (PPKS…TEVN). Asn-471 and Asn-500 each carry an N-linked (GlcNAc...) asparagine glycan. N-linked (GlcNAc...) asparagine glycans are attached at residues Asn-710, Asn-743, and Asn-800. The helical transmembrane segment at 833-853 (ISVLAILSTLLIGLLLVTLVI) threads the bilayer. At 854–1226 (LRKKHLQMAR…DVIYENVSKS (373 aa)) the chain is on the cytoplasmic side. Ser-875 is subject to Phosphoserine. Residues 948–1205 (FSLQFEELKL…IFIHQCVQLM (258 aa)) form the Tyrosine-protein phosphatase domain. Substrate-binding positions include Asp-1112, 1146 to 1152 (CSAGVGR), and Gln-1190. Cys-1146 (phosphocysteine intermediate) is an active-site residue. Tyr-1220 carries the phosphotyrosine modification.

Belongs to the protein-tyrosine phosphatase family. Receptor class 3 subfamily. As to quaternary structure, interacts (phosphorylated form) with FYN and GRB2.

It localises to the membrane. The catalysed reaction is O-phospho-L-tyrosyl-[protein] + H2O = L-tyrosyl-[protein] + phosphate. Functionally, possesses tyrosine phosphatase activity. Plays a role in regulating the glomerular pressure/filtration rate relationship through an effect on podocyte structure and function. The sequence is that of Receptor-type tyrosine-protein phosphatase O (Ptpro) from Mus musculus (Mouse).